The following is a 142-amino-acid chain: MKTYIPKDEDINREWFVVDAENMVLGRLATQIANKLRGKDKAMFTPHVDTGDFVVVLNADKIKVTGNKMDQKTYYKHTNHPGGLKERTLKVMLEKKPEVVIETAVRGMLPKNRLGKQMIKKLKVYAGTEHPHTAQQPKVLEF.

This sequence belongs to the universal ribosomal protein uL13 family. As to quaternary structure, part of the 50S ribosomal subunit.

In terms of biological role, this protein is one of the early assembly proteins of the 50S ribosomal subunit, although it is not seen to bind rRNA by itself. It is important during the early stages of 50S assembly. In Maridesulfovibrio salexigens (strain ATCC 14822 / DSM 2638 / NCIMB 8403 / VKM B-1763) (Desulfovibrio salexigens), this protein is Large ribosomal subunit protein uL13.